The following is a 72-amino-acid chain: DNA-directed RNA polymerase subunit omega (72 aa).

The protein belongs to the RNA polymerase subunit omega family. The RNAP catalytic core consists of 2 alpha, 1 beta, 1 beta' and 1 omega subunit. When a sigma factor is associated with the core the holoenzyme is formed, which can initiate transcription.

The enzyme catalyses RNA(n) + a ribonucleoside 5'-triphosphate = RNA(n+1) + diphosphate. Promotes RNA polymerase assembly. Latches the N- and C-terminal regions of the beta' subunit thereby facilitating its interaction with the beta and alpha subunits. This is DNA-directed RNA polymerase subunit omega from Laribacter hongkongensis (strain HLHK9).